Reading from the N-terminus, the 345-residue chain is S-adenosylmethionine:tRNA ribosyltransferase-isomerase (345 aa).

The protein belongs to the QueA family. As to quaternary structure, monomer.

The protein localises to the cytoplasm. The enzyme catalyses 7-aminomethyl-7-carbaguanosine(34) in tRNA + S-adenosyl-L-methionine = epoxyqueuosine(34) in tRNA + adenine + L-methionine + 2 H(+). It functions in the pathway tRNA modification; tRNA-queuosine biosynthesis. Functionally, transfers and isomerizes the ribose moiety from AdoMet to the 7-aminomethyl group of 7-deazaguanine (preQ1-tRNA) to give epoxyqueuosine (oQ-tRNA). The polypeptide is S-adenosylmethionine:tRNA ribosyltransferase-isomerase (Shewanella amazonensis (strain ATCC BAA-1098 / SB2B)).